The following is a 690-amino-acid chain: Protease 2 (690 aa).

Catalysis depends on charge relay system residues serine 534, aspartate 619, and histidine 654.

Belongs to the peptidase S9A family.

It catalyses the reaction Hydrolysis of -Arg-|-Xaa- and -Lys-|-Xaa- bonds in oligopeptides, even when P1' residue is proline.. In terms of biological role, cleaves peptide bonds on the C-terminal side of lysyl and argininyl residues. The sequence is that of Protease 2 (ptrB) from Moraxella lacunata.